Consider the following 314-residue polypeptide: 4-hydroxy-3-methylbut-2-enyl diphosphate reductase (314 aa).

C18 is a [4Fe-4S] cluster binding site. Residues H47 and H80 each coordinate (2E)-4-hydroxy-3-methylbut-2-enyl diphosphate. Residues H47 and H80 each coordinate dimethylallyl diphosphate. Residues H47 and H80 each coordinate isopentenyl diphosphate. A [4Fe-4S] cluster-binding site is contributed by C102. H130 provides a ligand contact to (2E)-4-hydroxy-3-methylbut-2-enyl diphosphate. H130 lines the dimethylallyl diphosphate pocket. H130 serves as a coordination point for isopentenyl diphosphate. E132 (proton donor) is an active-site residue. (2E)-4-hydroxy-3-methylbut-2-enyl diphosphate is bound at residue T171. C201 contributes to the [4Fe-4S] cluster binding site. (2E)-4-hydroxy-3-methylbut-2-enyl diphosphate-binding residues include S229, S230, N231, and S273. Dimethylallyl diphosphate is bound by residues S229, S230, N231, and S273. Residues S229, S230, N231, and S273 each contribute to the isopentenyl diphosphate site.

Belongs to the IspH family. The cofactor is [4Fe-4S] cluster.

The catalysed reaction is isopentenyl diphosphate + 2 oxidized [2Fe-2S]-[ferredoxin] + H2O = (2E)-4-hydroxy-3-methylbut-2-enyl diphosphate + 2 reduced [2Fe-2S]-[ferredoxin] + 2 H(+). It catalyses the reaction dimethylallyl diphosphate + 2 oxidized [2Fe-2S]-[ferredoxin] + H2O = (2E)-4-hydroxy-3-methylbut-2-enyl diphosphate + 2 reduced [2Fe-2S]-[ferredoxin] + 2 H(+). The protein operates within isoprenoid biosynthesis; dimethylallyl diphosphate biosynthesis; dimethylallyl diphosphate from (2E)-4-hydroxy-3-methylbutenyl diphosphate: step 1/1. It functions in the pathway isoprenoid biosynthesis; isopentenyl diphosphate biosynthesis via DXP pathway; isopentenyl diphosphate from 1-deoxy-D-xylulose 5-phosphate: step 6/6. Its function is as follows. Catalyzes the conversion of 1-hydroxy-2-methyl-2-(E)-butenyl 4-diphosphate (HMBPP) into a mixture of isopentenyl diphosphate (IPP) and dimethylallyl diphosphate (DMAPP). Acts in the terminal step of the DOXP/MEP pathway for isoprenoid precursor biosynthesis. This is 4-hydroxy-3-methylbut-2-enyl diphosphate reductase from Phenylobacterium zucineum (strain HLK1).